We begin with the raw amino-acid sequence, 203 residues long: MNPEYDYLFKLLLIGDSGVGKSCLLLRFADDSYLDSYISTIGVDFKIRTVEQDGKTIKLQIWDTAGQERFRTITSSYYRGAHGIIIVYDVTDQESFNNVKQWLNEIDRYASDNVNKLLVGNKSDLTANKVVATETAKAFADEMGIPFMETSAKNATNVQQAFMAMAASIKDRMASQPAAANARPATVQIRGQPVNQKTSCCSS.

GTP is bound by residues 15–23 (GDSGVGKSC), 33–40 (YLDSYIST), 63–67 (DTAGQ), 121–124 (NKSD), and 151–153 (SAK). Residues 37-45 (YISTIGVDF) carry the Effector region motif. Residues Cys-200 and Cys-201 are each lipidated (S-geranylgeranyl cysteine).

The protein belongs to the small GTPase superfamily. Rab family. Its expression is weak in stems, higher in roots, leaves and coleoptiles, but highest in flowers.

It is found in the cell membrane. In terms of biological role, protein transport. Probably involved in vesicular traffic. The sequence is that of GTP-binding protein YPTM2 (YPTM2) from Zea mays (Maize).